The primary structure comprises 223 residues: uncharacterized protein (223 aa).

The segment at 33-67 (CPICGGKGTLKAIQFIHRIPYFGEVMESTVVCERC) adopts a C4-type zinc-finger fold.

Belongs to the ZPR1 family.

This is an uncharacterized protein from Pyrococcus horikoshii (strain ATCC 700860 / DSM 12428 / JCM 9974 / NBRC 100139 / OT-3).